The primary structure comprises 670 residues: DNA ligase (670 aa).

Residues 32 to 36, 81 to 82, and Glu-113 contribute to the NAD(+) site; these read DAEYD and SL. Lys-115 (N6-AMP-lysine intermediate) is an active-site residue. NAD(+) is bound by residues Arg-136, Glu-173, Lys-290, and Lys-314. Zn(2+) contacts are provided by Cys-408, Cys-411, Cys-426, and Cys-432. One can recognise a BRCT domain in the interval 592–670; the sequence is EIDSPFAGKT…EAEMIRLLGE (79 aa).

Belongs to the NAD-dependent DNA ligase family. LigA subfamily. Mg(2+) is required as a cofactor. It depends on Mn(2+) as a cofactor.

The catalysed reaction is NAD(+) + (deoxyribonucleotide)n-3'-hydroxyl + 5'-phospho-(deoxyribonucleotide)m = (deoxyribonucleotide)n+m + AMP + beta-nicotinamide D-nucleotide.. Functionally, DNA ligase that catalyzes the formation of phosphodiester linkages between 5'-phosphoryl and 3'-hydroxyl groups in double-stranded DNA using NAD as a coenzyme and as the energy source for the reaction. It is essential for DNA replication and repair of damaged DNA. The protein is DNA ligase of Yersinia pseudotuberculosis serotype IB (strain PB1/+).